The primary structure comprises 1935 residues: Myosin heavy chain, fast skeletal muscle (1935 aa).

The Myosin N-terminal SH3-like domain maps to 32 to 81 (DAKTAFFVVDPDEMYLKGTLVSKEGGKATVKTHSGKTVTVKEDEIFPMNP). One can recognise a Myosin motor domain in the interval 85–779 (DKIEDMAMMT…LLGALEEMRD (695 aa)). At lysine 129 the chain carries N6,N6,N6-trimethyllysine. Residue 178–185 (GESGAGKT) coordinates ATP. Actin-binding regions lie at residues 659-681 (LMTN…ESKT) and 761-775 (HTKV…GALE). The 30-residue stretch at 782 to 811 (LALLVTMTQALCRGYVMRKEFVKMMERRES) folds into the IQ domain. The segment at 812–839 (IYSIQYNIRSFMNVKHWPWMKLYFKIKP) is hinge. Residues 840-1935 (LLKSAETEKE…RDAGKSKDEE (1096 aa)) adopt a coiled-coil conformation. Disordered regions lie at residues 1589 to 1608 (RNSQ…EVRS) and 1902 to 1935 (HELE…KDEE). A compositionally biased stretch (polar residues) spans 1592–1603 (QRVIDSMQSTLD). Composition is skewed to basic and acidic residues over residues 1902-1913 (HELEEAQERADV) and 1924-1935 (KSRDAGKSKDEE).

This sequence belongs to the TRAFAC class myosin-kinesin ATPase superfamily. Myosin family. In terms of assembly, muscle myosin is a hexameric protein that consists of 2 heavy chain subunits (MHC), 2 alkali light chain subunits (MLC) and 2 regulatory light chain subunits (MLC-2).

The protein resides in the cytoplasm. It is found in the myofibril. Its function is as follows. Muscle contraction. This is Myosin heavy chain, fast skeletal muscle from Cyprinus carpio (Common carp).